A 109-amino-acid chain; its full sequence is Phosphoribosyl-ATP pyrophosphatase (109 aa).

It belongs to the PRA-PH family.

The protein localises to the cytoplasm. It carries out the reaction 1-(5-phospho-beta-D-ribosyl)-ATP + H2O = 1-(5-phospho-beta-D-ribosyl)-5'-AMP + diphosphate + H(+). The protein operates within amino-acid biosynthesis; L-histidine biosynthesis; L-histidine from 5-phospho-alpha-D-ribose 1-diphosphate: step 2/9. The chain is Phosphoribosyl-ATP pyrophosphatase from Azorhizobium caulinodans (strain ATCC 43989 / DSM 5975 / JCM 20966 / LMG 6465 / NBRC 14845 / NCIMB 13405 / ORS 571).